The primary structure comprises 461 residues: RCC1-like G exchanging factor-like protein (461 aa).

Over residues 1–10 (MLAAARALRG) the composition is skewed to low complexity. The N-terminal 34 residues, 1-34 (MLAAARALRGPRPRWPTPAREHWTPAGRSRSRRE), are a transit peptide targeting the mitochondrion. Residues 1 to 35 (MLAAARALRGPRPRWPTPAREHWTPAGRSRSRREA) are disordered. 7 RCC1 repeats span residues 55–121 (ADRV…LSSK), 125–188 (VTKV…VLTD), 190–244 (EGVF…FLTD), 245–297 (KGEV…ALSA), 298–350 (DGGV…VLNA), 352–408 (GHVF…ALTN), and 409–458 (KGEL…TLAK).

Forms a regulatory protein-RNA complex, consisting of RCC1L, NGRN, RPUSD3, RPUSD4, TRUB2, FASTKD2 and 16S mt-rRNA. Interacts with 16S mt-rRNA; this interaction is direct. Interacts with OPA1; this interaction is direct. In terms of tissue distribution, at E8.5, broadly expressed in yolk sac placenta, decidua, and embryo, with highest levels found in the trophoblast giant cells (TGCs) and ectoplacental cone (at protein level).

The protein resides in the mitochondrion inner membrane. Its function is as follows. Guanine nucleotide exchange factor (GEF) for mitochondrial dynamin-related GTPase OPA1. Activates OPA1, by exchanging bound GDP for free GTP, and drives OPA1 and MFN1-dependent mitochondrial fusion. Plays an essential role in mitochondrial ribosome biogenesis. As a component of a functional protein-RNA module, consisting of RCC1L, NGRN, RPUSD3, RPUSD4, TRUB2, FASTKD2 and 16S mitochondrial ribosomal RNA (16S mt-rRNA), controls 16S mt-rRNA abundance and is required for intra-mitochondrial translation of core subunits of the oxidative phosphorylation system. This Mus musculus (Mouse) protein is RCC1-like G exchanging factor-like protein.